An 85-amino-acid chain; its full sequence is Toxin TdNa9 (85 aa).

Positions 1–21 (MLKFAIAVALLLFIGLELREA) are cleaved as a signal peptide. An LCN-type CS-alpha/beta domain is found at 22 to 84 (RDGYPQSKVN…YGDPGTKPCM (63 aa)). 4 disulfides stabilise this stretch: C33/C83, C37/C58, C43/C63, and C47/C65.

This sequence belongs to the long (4 C-C) scorpion toxin superfamily. Sodium channel inhibitor family. Beta subfamily. In terms of tissue distribution, expressed by the venom gland.

The protein localises to the secreted. Functionally, alpha toxins bind voltage-independently at site-3 of sodium channels (Nav) and inhibit the inactivation of the activated channels, thereby blocking neuronal transmission. This toxin binds, in vitro, to sodium channels and inhibits the inactivation of the activated channels. Seems not toxic to mice, crickets and sweet-water shrimps. This is Toxin TdNa9 from Tityus discrepans (Venezuelan scorpion).